Consider the following 524-residue polypeptide: Glutamyl-tRNA(Gln) amidotransferase subunit A, mitochondrial (524 aa).

Residues Lys-76 and Ser-171 each act as charge relay system in the active site. Ser-195 acts as the Acyl-ester intermediate in catalysis.

Belongs to the amidase family. GatA subfamily. As to quaternary structure, subunit of the heterotrimeric GatCAB amidotransferase (AdT) complex, composed of A (qrsl1), B (gatb) and C (gatc) subunits.

It is found in the mitochondrion. The catalysed reaction is L-glutamyl-tRNA(Gln) + L-glutamine + ATP + H2O = L-glutaminyl-tRNA(Gln) + L-glutamate + ADP + phosphate + H(+). Functionally, allows the formation of correctly charged Gln-tRNA(Gln) through the transamidation of misacylated Glu-tRNA(Gln) in the mitochondria. The reaction takes place in the presence of glutamine and ATP through an activated gamma-phospho-Glu-tRNA(Gln). The protein is Glutamyl-tRNA(Gln) amidotransferase subunit A, mitochondrial (qrsl1) of Xenopus laevis (African clawed frog).